A 332-amino-acid chain; its full sequence is tRNA dimethylallyltransferase (332 aa).

Residue 17-24 (GPTCSGKS) participates in ATP binding. 19-24 (TCSGKS) lines the substrate pocket. 2 interaction with substrate tRNA regions span residues 42 to 45 (DSMQ) and 166 to 170 (QRISR).

The protein belongs to the IPP transferase family. In terms of assembly, monomer. Requires Mg(2+) as cofactor.

The catalysed reaction is adenosine(37) in tRNA + dimethylallyl diphosphate = N(6)-dimethylallyladenosine(37) in tRNA + diphosphate. Functionally, catalyzes the transfer of a dimethylallyl group onto the adenine at position 37 in tRNAs that read codons beginning with uridine, leading to the formation of N6-(dimethylallyl)adenosine (i(6)A). This is tRNA dimethylallyltransferase from Gluconobacter oxydans (strain 621H) (Gluconobacter suboxydans).